The sequence spans 547 residues: GMP synthase [glutamine-hydrolyzing] (547 aa).

The 199-residue stretch at 12–210 (KVLILDFGSQ…VLEIAGAKPD (199 aa)) folds into the Glutamine amidotransferase type-1 domain. Cys89 acts as the Nucleophile in catalysis. Residues His184 and Glu186 contribute to the active site. The GMPS ATP-PPase domain occupies 211–403 (WIMRDHIEEA…LGLPPEMVYR (193 aa)). An ATP-binding site is contributed by 238 to 244 (SGGVDSS).

Homodimer.

The catalysed reaction is XMP + L-glutamine + ATP + H2O = GMP + L-glutamate + AMP + diphosphate + 2 H(+). It participates in purine metabolism; GMP biosynthesis; GMP from XMP (L-Gln route): step 1/1. Catalyzes the synthesis of GMP from XMP. This Ralstonia nicotianae (strain ATCC BAA-1114 / GMI1000) (Ralstonia solanacearum) protein is GMP synthase [glutamine-hydrolyzing].